Reading from the N-terminus, the 1776-residue chain is Signal-induced proliferation-associated 1-like protein 3 (1776 aa).

Disordered regions lie at residues 41 to 157 (AQNG…GRAF) and 240 to 325 (PGAL…EASR). Positions 54-69 (PAATTTRPSPTTPAMP) are enriched in low complexity. 2 stretches are compositionally biased toward polar residues: residues 89 to 99 (EQSNPSPSQDT) and 112 to 129 (RNLQ…SSGS). S94 carries the post-translational modification Phosphoserine. Basic residues predominate over residues 131 to 140 (AFHRLSRRRS). The residue at position 140 (S140) is a Phosphoserine. The segment covering 257–268 (GQPTKDSLQSLQ) has biased composition (polar residues). S394 bears the Phosphoserine mark. The tract at residues 438–461 (SRASVGSPGGSSEAHMAEPTLSTH) is disordered. In terms of domain architecture, Rap-GAP spans 605-822 (LLKLDEQGLC…RTRQEYLKDL (218 aa)). The 65-residue stretch at 960 to 1024 (DMTLRRNGLG…DQMIDLLRTS (65 aa)) folds into the PDZ domain. Disordered stretches follow at residues 1040–1104 (PRRG…AQSL), 1117–1164 (RESQ…ATYA), and 1184–1632 (DPHF…LDPG). 2 stretches are compositionally biased toward polar residues: residues 1074–1104 (APWQ…AQSL) and 1151–1160 (PSGSFSTPGS). The segment covering 1190 to 1201 (DGMSSGDSSSGG) has biased composition (low complexity). Residues 1239–1255 (SRQDAAGKDSPNRHSKG) are compositionally biased toward basic and acidic residues. Low complexity predominate over residues 1260-1275 (SSHSSSNTLSSNASSS). Residues 1298–1316 (GGSSDSGIDTTLYTSSPSC) show a composition bias toward polar residues. Residues 1344–1357 (SAGRPHPVDRRREV) show a composition bias toward basic and acidic residues. S1358 is modified (phosphoserine). At T1381 the chain carries Phosphothreonine. Residues 1409–1436 (VYKTASAETPRPSQLSQCSPFQLSTSVP) are compositionally biased toward polar residues. The residue at position 1442 (K1442) is an N6-acetyllysine. The span at 1503–1512 (TIEDDLKKLI) shows a compositional bias: basic and acidic residues. 2 stretches are compositionally biased toward polar residues: residues 1526-1541 (GQSP…SDES) and 1566-1578 (LFTS…SSTL). Phosphoserine occurs at positions 1538 and 1541. The segment covering 1589 to 1601 (PPSGAPSTTPATG) has biased composition (low complexity). 2 positions are modified to phosphoserine: S1614 and S1617. The span at 1620–1630 (DGRDRPLRRLD) shows a compositional bias: basic and acidic residues. S1672 is modified (phosphoserine). The interval 1678–1705 (AHSPVHSHLSLERGPQTPRATPTMSEES) is disordered. T1694 and T1698 each carry phosphothreonine. Positions 1715 to 1769 (QLEVMLKQLHTDLQKEKQDKVVLQSEVASLRQNNQRLQEESQAASEQLRKFAELF) form a coiled coil.

The protein resides in the apical cell membrane. Its function is as follows. Plays a critical role in epithelial cell morphogenesis, polarity, adhesion and cytoskeletal organization in the lens. The chain is Signal-induced proliferation-associated 1-like protein 3 (Sipa1l3) from Mus musculus (Mouse).